A 441-amino-acid polypeptide reads, in one-letter code: Arginine biosynthesis bifunctional protein ArgJ, mitochondrial (441 aa).

Residues T177, K204, T215, E301, N436, and S441 each coordinate substrate. The active-site Nucleophile is T215.

This sequence belongs to the ArgJ family. In terms of assembly, heterodimer of an alpha and a beta chain. In terms of processing, the alpha and beta chains are autoproteolytically processed from a single precursor protein within the mitochondrion.

It localises to the mitochondrion matrix. It carries out the reaction N(2)-acetyl-L-ornithine + L-glutamate = N-acetyl-L-glutamate + L-ornithine. The enzyme catalyses L-glutamate + acetyl-CoA = N-acetyl-L-glutamate + CoA + H(+). It functions in the pathway amino-acid biosynthesis; L-arginine biosynthesis; L-ornithine and N-acetyl-L-glutamate from L-glutamate and N(2)-acetyl-L-ornithine (cyclic): step 1/1. Its pathway is amino-acid biosynthesis; L-arginine biosynthesis; N(2)-acetyl-L-ornithine from L-glutamate: step 1/4. Functionally, catalyzes two activities which are involved in the cyclic version of arginine biosynthesis: the synthesis of acetylglutamate from glutamate and acetyl-CoA, and of ornithine by transacetylation between acetylornithine and glutamate. The chain is Arginine biosynthesis bifunctional protein ArgJ, mitochondrial from Lachancea thermotolerans (strain ATCC 56472 / CBS 6340 / NRRL Y-8284) (Yeast).